A 193-amino-acid polypeptide reads, in one-letter code: Potassium-transporting ATPase KdpC subunit (193 aa).

Residues 7-27 (PLVVIFAVLTVVTGMAYPAVM) traverse the membrane as a helical segment.

Belongs to the KdpC family. In terms of assembly, the system is composed of three essential subunits: KdpA, KdpB and KdpC.

Its subcellular location is the cell inner membrane. Functionally, part of the high-affinity ATP-driven potassium transport (or Kdp) system, which catalyzes the hydrolysis of ATP coupled with the electrogenic transport of potassium into the cytoplasm. This subunit acts as a catalytic chaperone that increases the ATP-binding affinity of the ATP-hydrolyzing subunit KdpB by the formation of a transient KdpB/KdpC/ATP ternary complex. The sequence is that of Potassium-transporting ATPase KdpC subunit from Burkholderia vietnamiensis (strain G4 / LMG 22486) (Burkholderia cepacia (strain R1808)).